We begin with the raw amino-acid sequence, 291 residues long: Phosphatidylserine decarboxylase proenzyme (291 aa).

Catalysis depends on charge relay system; for autoendoproteolytic cleavage activity residues Asp90, His147, and Ser253. Ser253 serves as the catalytic Schiff-base intermediate with substrate; via pyruvic acid; for decarboxylase activity. A Pyruvic acid (Ser); by autocatalysis modification is found at Ser253.

This sequence belongs to the phosphatidylserine decarboxylase family. PSD-B subfamily. Prokaryotic type I sub-subfamily. In terms of assembly, heterodimer of a large membrane-associated beta subunit and a small pyruvoyl-containing alpha subunit. Requires pyruvate as cofactor. Is synthesized initially as an inactive proenzyme. Formation of the active enzyme involves a self-maturation process in which the active site pyruvoyl group is generated from an internal serine residue via an autocatalytic post-translational modification. Two non-identical subunits are generated from the proenzyme in this reaction, and the pyruvate is formed at the N-terminus of the alpha chain, which is derived from the carboxyl end of the proenzyme. The autoendoproteolytic cleavage occurs by a canonical serine protease mechanism, in which the side chain hydroxyl group of the serine supplies its oxygen atom to form the C-terminus of the beta chain, while the remainder of the serine residue undergoes an oxidative deamination to produce ammonia and the pyruvoyl prosthetic group on the alpha chain. During this reaction, the Ser that is part of the protease active site of the proenzyme becomes the pyruvoyl prosthetic group, which constitutes an essential element of the active site of the mature decarboxylase.

It localises to the cell membrane. It catalyses the reaction a 1,2-diacyl-sn-glycero-3-phospho-L-serine + H(+) = a 1,2-diacyl-sn-glycero-3-phosphoethanolamine + CO2. The protein operates within phospholipid metabolism; phosphatidylethanolamine biosynthesis; phosphatidylethanolamine from CDP-diacylglycerol: step 2/2. Functionally, catalyzes the formation of phosphatidylethanolamine (PtdEtn) from phosphatidylserine (PtdSer). The protein is Phosphatidylserine decarboxylase proenzyme of Photobacterium profundum (strain SS9).